The chain runs to 842 residues: DNA topoisomerase-like protein cin-4 (842 aa).

Positions 1–26 are enriched in basic and acidic residues; the sequence is MSEEDRNVFTSIDKKGGGSKQMDDLN. A disordered region spans residues 1-50; that stretch reads MSEEDRNVFTSIDKKGGGSKQMDDLNQKCPKRKTSKLKGIPKLEDANDAG. Positions 314-783 constitute a Topo IIA-type catalytic domain; it reads IPCLVDGLKP…TWQDLWITDL (470 aa).

This sequence belongs to the type II topoisomerase family.

Its function is as follows. Plays a role in the removal of cohesin from kinetochores on mitotic chromosomes and is required for centromere resolution. The protein is DNA topoisomerase-like protein cin-4 of Caenorhabditis elegans.